Consider the following 904-residue polypeptide: NADH-quinone oxidoreductase subunit G (904 aa).

The 2Fe-2S ferredoxin-type domain occupies 1–83 (MATIHVDGKE…GSWISIDDEE (83 aa)). Residues Cys-34, Cys-45, Cys-48, and Cys-67 each contribute to the [2Fe-2S] cluster site. Residues 83–122 (EAKVFRASVVEWLMTNHPHDCPVCEEGGHCHLQDMTVMTG) form the 4Fe-4S His(Cys)3-ligated-type domain. His-99, Cys-103, Cys-106, Cys-112, Cys-151, Cys-154, Cys-157, Cys-201, Cys-228, Cys-231, Cys-235, and Cys-263 together coordinate [4Fe-4S] cluster. Positions 221–277 (MQFSPSICHGCSSGCNISPGERYGELRRIENRFNGSVNQYFLCDRGRFGYGYVNRKD) constitute a 4Fe-4S Mo/W bis-MGD-type domain.

Belongs to the complex I 75 kDa subunit family. As to quaternary structure, composed of 13 different subunits. Subunits NuoCD, E, F, and G constitute the peripheral sector of the complex. Requires [2Fe-2S] cluster as cofactor. [4Fe-4S] cluster serves as cofactor.

It carries out the reaction a quinone + NADH + 5 H(+)(in) = a quinol + NAD(+) + 4 H(+)(out). In terms of biological role, NDH-1 shuttles electrons from NADH, via FMN and iron-sulfur (Fe-S) centers, to quinones in the respiratory chain. The immediate electron acceptor for the enzyme in this species is believed to be ubiquinone. Couples the redox reaction to proton translocation (for every two electrons transferred, four hydrogen ions are translocated across the cytoplasmic membrane), and thus conserves the redox energy in a proton gradient. Required for plants roots colonization. The sequence is that of NADH-quinone oxidoreductase subunit G (nuoG) from Pseudomonas fluorescens.